The sequence spans 168 residues: Chorismate pyruvate-lyase (168 aa).

4 residues coordinate substrate: M36, R78, L116, and E157.

The protein belongs to the UbiC family. In terms of assembly, monomer.

The protein localises to the cytoplasm. The enzyme catalyses chorismate = 4-hydroxybenzoate + pyruvate. Its pathway is cofactor biosynthesis; ubiquinone biosynthesis. Its function is as follows. Removes the pyruvyl group from chorismate, with concomitant aromatization of the ring, to provide 4-hydroxybenzoate (4HB) for the ubiquinone pathway. The protein is Chorismate pyruvate-lyase of Yersinia enterocolitica serotype O:8 / biotype 1B (strain NCTC 13174 / 8081).